The chain runs to 244 residues: Uridylate kinase (244 aa).

Residue Lys-17–Gly-20 coordinates ATP. Gly-59 is a UMP binding site. ATP contacts are provided by Gly-60 and Arg-64. Residues Asp-79 and Thr-140–Thr-147 contribute to the UMP site. The ATP site is built by Thr-167, Tyr-173, and Asp-176.

This sequence belongs to the UMP kinase family. As to quaternary structure, homohexamer.

Its subcellular location is the cytoplasm. The catalysed reaction is UMP + ATP = UDP + ADP. It participates in pyrimidine metabolism; CTP biosynthesis via de novo pathway; UDP from UMP (UMPK route): step 1/1. With respect to regulation, inhibited by UTP. Its function is as follows. Catalyzes the reversible phosphorylation of UMP to UDP. This is Uridylate kinase from Hahella chejuensis (strain KCTC 2396).